We begin with the raw amino-acid sequence, 637 residues long: 3D-(3,5/4)-trihydroxycyclohexane-1,2-dione hydrolase (637 aa).

Glu66 serves as a coordination point for thiamine diphosphate. Residues 442-522 (SLPGDLQRLW…INVLLFDNSG (81 aa)) are thiamine pyrophosphate binding. 2 residues coordinate Mg(2+): Asp493 and Asn520.

The protein belongs to the TPP enzyme family. It depends on Mg(2+) as a cofactor. Thiamine diphosphate serves as cofactor.

The enzyme catalyses 3D-3,5/4-trihydroxycyclohexane-1,2-dione + H2O = 5-deoxy-D-glucuronate + H(+). Its pathway is polyol metabolism; myo-inositol degradation into acetyl-CoA; acetyl-CoA from myo-inositol: step 3/7. In terms of biological role, involved in the cleavage of the C1-C2 bond of 3D-(3,5/4)-trihydroxycyclohexane-1,2-dione (THcHDO) to yield 5-deoxy-glucuronate (5DG). The chain is 3D-(3,5/4)-trihydroxycyclohexane-1,2-dione hydrolase from Bacillus licheniformis (strain ATCC 14580 / DSM 13 / JCM 2505 / CCUG 7422 / NBRC 12200 / NCIMB 9375 / NCTC 10341 / NRRL NRS-1264 / Gibson 46).